Consider the following 464-residue polypeptide: Opioid growth factor receptor-like protein 1 (464 aa).

Disordered stretches follow at residues methionine 1–lysine 91 and glutamate 309–glycine 464. Residues glutamine 43–glycine 59 are compositionally biased toward basic and acidic residues. Residues alanine 74–glycine 86 show a composition bias toward low complexity. Over residues proline 316–lysine 325 the composition is skewed to basic and acidic residues. The segment covering glutamine 327–serine 342 has biased composition (polar residues). 3 stretches are compositionally biased toward basic and acidic residues: residues serine 363 to serine 382, proline 390 to alanine 400, and serine 425 to glutamate 439. Over residues alanine 452–glycine 464 the composition is skewed to polar residues.

Belongs to the opioid growth factor receptor family.

In Mus musculus (Mouse), this protein is Opioid growth factor receptor-like protein 1 (Ogfrl1).